The primary structure comprises 267 residues: 2-keto-3-deoxy-L-rhamnonate aldolase (267 aa).

Histidine 49 acts as the Proton acceptor in catalysis. Residue glutamine 151 participates in substrate binding. Glutamate 153 contacts Mg(2+). Residues alanine 178 and aspartate 179 each coordinate substrate. Aspartate 179 serves as a coordination point for Mg(2+).

It belongs to the HpcH/HpaI aldolase family. KDR aldolase subfamily. Homohexamer. Mg(2+) serves as cofactor.

The enzyme catalyses 2-dehydro-3-deoxy-L-rhamnonate = (S)-lactaldehyde + pyruvate. Catalyzes the reversible retro-aldol cleavage of 2-keto-3-deoxy-L-rhamnonate (KDR) to pyruvate and lactaldehyde. In Salmonella agona (strain SL483), this protein is 2-keto-3-deoxy-L-rhamnonate aldolase.